A 151-amino-acid polypeptide reads, in one-letter code: Small ribosomal subunit protein bS6 (151 aa).

A disordered region spans residues 96 to 151 (HEEGQSAMLTRRDDRRERDGDDRPRRREGGFDRGDRGDRGDRGPRRPRDNEAGEGA).

This sequence belongs to the bacterial ribosomal protein bS6 family.

Binds together with bS18 to 16S ribosomal RNA. The polypeptide is Small ribosomal subunit protein bS6 (Brucella anthropi (strain ATCC 49188 / DSM 6882 / CCUG 24695 / JCM 21032 / LMG 3331 / NBRC 15819 / NCTC 12168 / Alc 37) (Ochrobactrum anthropi)).